Here is a 172-residue protein sequence, read N- to C-terminus: ATP synthase subunit b (172 aa).

The helical transmembrane segment at Leu27–Glu47 threads the bilayer.

This sequence belongs to the ATPase B chain family. As to quaternary structure, F-type ATPases have 2 components, F(1) - the catalytic core - and F(0) - the membrane proton channel. F(1) has five subunits: alpha(3), beta(3), gamma(1), delta(1), epsilon(1). F(0) has four main subunits: a(1), b(1), b'(1) and c(10-14). The alpha and beta chains form an alternating ring which encloses part of the gamma chain. F(1) is attached to F(0) by a central stalk formed by the gamma and epsilon chains, while a peripheral stalk is formed by the delta, b and b' chains.

It localises to the cellular thylakoid membrane. In terms of biological role, f(1)F(0) ATP synthase produces ATP from ADP in the presence of a proton or sodium gradient. F-type ATPases consist of two structural domains, F(1) containing the extramembraneous catalytic core and F(0) containing the membrane proton channel, linked together by a central stalk and a peripheral stalk. During catalysis, ATP synthesis in the catalytic domain of F(1) is coupled via a rotary mechanism of the central stalk subunits to proton translocation. Its function is as follows. Component of the F(0) channel, it forms part of the peripheral stalk, linking F(1) to F(0). This chain is ATP synthase subunit b, found in Prochlorococcus marinus (strain MIT 9313).